Here is a 482-residue protein sequence, read N- to C-terminus: 2-succinylbenzoate--CoA ligase (482 aa).

The protein belongs to the ATP-dependent AMP-binding enzyme family. MenE subfamily.

It carries out the reaction 2-succinylbenzoate + ATP + CoA = 2-succinylbenzoyl-CoA + AMP + diphosphate. The protein operates within quinol/quinone metabolism; 1,4-dihydroxy-2-naphthoate biosynthesis; 1,4-dihydroxy-2-naphthoate from chorismate: step 5/7. It functions in the pathway quinol/quinone metabolism; menaquinone biosynthesis. Converts 2-succinylbenzoate (OSB) to 2-succinylbenzoyl-CoA (OSB-CoA). This Bacillus cereus (strain AH820) protein is 2-succinylbenzoate--CoA ligase.